The sequence spans 802 residues: Homeobox-leucine zipper protein ANTHOCYANINLESS 2 (802 aa).

Residues Q71–P143 form a disordered region. Over residues R103–S113 the composition is skewed to basic and acidic residues. Residues P133–T142 are compositionally biased toward basic residues. A DNA-binding region (homeobox) is located at residues R134 to L193. A coiled-coil region spans residues F182–N221. Residues G315–I546 enclose the START domain.

The protein belongs to the HD-ZIP homeobox family. Class IV subfamily. As to quaternary structure, interacts with AIL7/PLT7, ANT, BBM and AIL1. In terms of tissue distribution, expressed in roots, stems, leaves and floral buds.

The protein localises to the nucleus. In terms of biological role, probable transcription factor involved in the regulation of the tissue-specific accumulation of anthocyanins and in cellular organization of the primary root. The polypeptide is Homeobox-leucine zipper protein ANTHOCYANINLESS 2 (Arabidopsis thaliana (Mouse-ear cress)).